We begin with the raw amino-acid sequence, 540 residues long: Phosphoenolpyruvate carboxykinase (ATP) (540 aa).

A substrate-binding site is contributed by R65. K87 is subject to N6-acetyllysine. Positions 207 and 213 each coordinate substrate. Residues K213, H232, and 248-256 (GLSGTGKTT) contribute to the ATP site. K213 and H232 together coordinate Mn(2+). Residue D269 coordinates Mn(2+). ATP contacts are provided by residues E297, R333, 449–450 (RI), and T455. R333 lines the substrate pocket. K523 is subject to N6-acetyllysine.

It belongs to the phosphoenolpyruvate carboxykinase (ATP) family. As to quaternary structure, monomer. Mn(2+) is required as a cofactor.

It localises to the cytoplasm. The enzyme catalyses oxaloacetate + ATP = phosphoenolpyruvate + ADP + CO2. It participates in carbohydrate biosynthesis; gluconeogenesis. Functionally, involved in the gluconeogenesis. Catalyzes the conversion of oxaloacetate (OAA) to phosphoenolpyruvate (PEP) through direct phosphoryl transfer between the nucleoside triphosphate and OAA. The polypeptide is Phosphoenolpyruvate carboxykinase (ATP) (Shigella flexneri).